The primary structure comprises 236 residues: Small ribosomal subunit protein uS2c (236 aa).

The protein belongs to the universal ribosomal protein uS2 family.

The protein resides in the plastid. Its subcellular location is the chloroplast. This is Small ribosomal subunit protein uS2c (rps2) from Vitis vinifera (Grape).